The following is a 260-amino-acid chain: Hydroxypyruvate/pyruvate aldolase Bphyt_0320 (260 aa).

Histidine 48 acts as the Proton acceptor in catalysis. Residues glutamate 157 and aspartate 183 each coordinate a divalent metal cation.

Belongs to the HpcH/HpaI aldolase family. The cofactor is Mn(2+). Mg(2+) is required as a cofactor. Co(2+) serves as cofactor.

It carries out the reaction D-glyceraldehyde + 3-hydroxypyruvate = 2-dehydro-D-gluconate. It catalyses the reaction D-glyceraldehyde + pyruvate = 2-dehydro-3-deoxy-L-galactonate. The enzyme catalyses 2-dehydro-3-deoxy-D-gluconate = D-glyceraldehyde + pyruvate. In terms of biological role, aldolase which can catalyze in vitro the aldolisation reaction between hydroxypyruvate (HPA) or pyruvate (PA) and D-glyceraldehyde (D-GA). The condensation of hydroxypyruvate and D-glyceraldehyde produces 2-dehydro-D-gluconate. The condensation of pyruvate and D-glyceraldehyde produces 2-dehydro-3-deoxy-L-galactonate as the major product and 2-dehydro-3-deoxy-D-gluconate. Also catalyzes the retro-aldol type decarboxylation of oxaloacetate, a general property of known pyruvate aldolases. The sequence is that of Hydroxypyruvate/pyruvate aldolase Bphyt_0320 from Paraburkholderia phytofirmans (strain DSM 17436 / LMG 22146 / PsJN) (Burkholderia phytofirmans).